Reading from the N-terminus, the 391-residue chain is Processive diacylglycerol beta-glucosyltransferase (391 aa).

Belongs to the glycosyltransferase 28 family. UgtP subfamily.

The protein resides in the cell membrane. The enzyme catalyses a 1,2-diacyl-3-O-(beta-D-glucopyranosyl)-sn-glycerol + UDP-alpha-D-glucose = a 1,2-diacyl-3-O-(beta-D-Glc-(1-&gt;6)-beta-D-Glc)-sn-glycerol + UDP + H(+). It carries out the reaction a 1,2-diacyl-sn-glycerol + UDP-alpha-D-glucose = a 1,2-diacyl-3-O-(beta-D-glucopyranosyl)-sn-glycerol + UDP + H(+). Its pathway is glycolipid metabolism; diglucosyl-diacylglycerol biosynthesis. Its function is as follows. Processive glucosyltransferase involved in the biosynthesis of both the bilayer- and non-bilayer-forming membrane glucolipids. Is able to successively transfer two glucosyl residues to diacylglycerol (DAG), thereby catalyzing the formation of beta-monoglucosyl-DAG (3-O-(beta-D-glucopyranosyl)-1,2-diacyl-sn-glycerol) and beta-diglucosyl-DAG (3-O-(beta-D-glucopyranosyl-beta-(1-&gt;6)-D-glucopyranosyl)-1,2-diacyl-sn-glycerol). Beta-diglucosyl-DAG is the predominant glycolipid found in Bacillales and is also used as a membrane anchor for lipoteichoic acid (LTA). The polypeptide is Processive diacylglycerol beta-glucosyltransferase (Staphylococcus aureus (strain bovine RF122 / ET3-1)).